Reading from the N-terminus, the 432-residue chain is Neuronal pentraxin-2 (432 aa).

The N-terminal stretch at 1–14 is a signal peptide; sequence MLALLTAGVALAVA. N-linked (GlcNAc...) asparagine glycans are attached at residues Asn149 and Asn190. The region spanning 224–425 is the Pentraxin (PTX) domain; sequence DAFKVSLPLR…GASKWPVETC (202 aa). A disulfide bridge connects residues Cys254 and Cys314. Asn278, Glu356, Gln357, Asp358, and Gln368 together coordinate Ca(2+). An N-linked (GlcNAc...) asparagine glycan is attached at Asn394.

Homooligomer or heterooligomer (probably pentamer) with neuronal pentraxin receptor (NPTXR). Ca(2+) serves as cofactor.

Its subcellular location is the secreted. Likely to play role in the modification of cellular properties that underlie long-term plasticity. Binds to agar matrix in a calcium-dependent manner. In Rattus norvegicus (Rat), this protein is Neuronal pentraxin-2 (Nptx2).